A 63-amino-acid polypeptide reads, in one-letter code: Small ribosomal subunit protein uS14 (63 aa).

C26, C29, C42, and C45 together coordinate Zn(2+).

It belongs to the universal ribosomal protein uS14 family. Zinc-binding uS14 subfamily. In terms of assembly, part of the 30S ribosomal subunit. Contacts proteins S3 and S10. Zn(2+) is required as a cofactor.

Binds 16S rRNA, required for the assembly of 30S particles and may also be responsible for determining the conformation of the 16S rRNA at the A site. The sequence is that of Small ribosomal subunit protein uS14 from Gloeobacter violaceus (strain ATCC 29082 / PCC 7421).